The sequence spans 441 residues: Ribosomal protein uS12 methylthiotransferase RimO (441 aa).

An MTTase N-terminal domain is found at 7 to 117; that stretch reads PKISFVSLGC…VLEAVHRARP (111 aa). Positions 16, 52, 81, 148, 152, and 155 each coordinate [4Fe-4S] cluster. Residues 134–371 enclose the Radical SAM core domain; that stretch reads LTPRHYAYLK…MARQQAISAR (238 aa). In terms of domain architecture, TRAM spans 374–440; the sequence is KRKVGTRQQV…AYDLHGTVAG (67 aa).

The protein belongs to the methylthiotransferase family. RimO subfamily. It depends on [4Fe-4S] cluster as a cofactor.

It localises to the cytoplasm. The enzyme catalyses L-aspartate(89)-[ribosomal protein uS12]-hydrogen + (sulfur carrier)-SH + AH2 + 2 S-adenosyl-L-methionine = 3-methylsulfanyl-L-aspartate(89)-[ribosomal protein uS12]-hydrogen + (sulfur carrier)-H + 5'-deoxyadenosine + L-methionine + A + S-adenosyl-L-homocysteine + 2 H(+). Catalyzes the methylthiolation of an aspartic acid residue of ribosomal protein uS12. The protein is Ribosomal protein uS12 methylthiotransferase RimO of Rhodopseudomonas palustris (strain ATCC BAA-98 / CGA009).